The chain runs to 491 residues: Probable folate-biopterin transporter 4 (491 aa).

The next 6 membrane-spanning stretches (helical) occupy residues 14–34, 52–72, 84–104, 112–132, 154–174, and 179–199; these read VAFL…SFVW, SQFV…YGII, TPYL…LGLD, LYLM…DVVI, VSWF…GYAL, and IETI…SCAL. The interval 222 to 262 is disordered; sequence KSLTSNDNYPDTSKSNTRRRKGQKKGKKGDSNGKSETQKKQ. Positions 224–236 are enriched in polar residues; the sequence is LTSNDNYPDTSKS. Residues 237–248 show a composition bias toward basic residues; the sequence is NTRRRKGQKKGK. Residues 249 to 260 show a composition bias toward basic and acidic residues; that stretch reads KGDSNGKSETQK. The next 6 membrane-spanning stretches (helical) occupy residues 294-314, 323-343, 356-376, 389-411, 437-457, and 461-481; these read MAWF…MFYY, AAFL…GTFI, SLLF…VLVS, MVLF…FLIL, TVGS…SGSF, and FMGL…LFLI.

The protein belongs to the major facilitator superfamily. Folate-biopterin transporter (TC 2.A.71) family.

The protein localises to the membrane. Functionally, could mediate folate transport. The sequence is that of Probable folate-biopterin transporter 4 from Arabidopsis thaliana (Mouse-ear cress).